Here is a 218-residue protein sequence, read N- to C-terminus: Thiamine-phosphate synthase (218 aa).

4-amino-2-methyl-5-(diphosphooxymethyl)pyrimidine contacts are provided by residues 43–47 and asparagine 75; that span reads QLRDK. Positions 76 and 95 each coordinate Mg(2+). A 4-amino-2-methyl-5-(diphosphooxymethyl)pyrimidine-binding site is contributed by serine 114. 141–143 provides a ligand contact to 2-[(2R,5Z)-2-carboxy-4-methylthiazol-5(2H)-ylidene]ethyl phosphate; that stretch reads TPT. Residue lysine 144 coordinates 4-amino-2-methyl-5-(diphosphooxymethyl)pyrimidine. 2-[(2R,5Z)-2-carboxy-4-methylthiazol-5(2H)-ylidene]ethyl phosphate is bound at residue glycine 172.

The protein belongs to the thiamine-phosphate synthase family. Mg(2+) is required as a cofactor.

It carries out the reaction 2-[(2R,5Z)-2-carboxy-4-methylthiazol-5(2H)-ylidene]ethyl phosphate + 4-amino-2-methyl-5-(diphosphooxymethyl)pyrimidine + 2 H(+) = thiamine phosphate + CO2 + diphosphate. The catalysed reaction is 2-(2-carboxy-4-methylthiazol-5-yl)ethyl phosphate + 4-amino-2-methyl-5-(diphosphooxymethyl)pyrimidine + 2 H(+) = thiamine phosphate + CO2 + diphosphate. It catalyses the reaction 4-methyl-5-(2-phosphooxyethyl)-thiazole + 4-amino-2-methyl-5-(diphosphooxymethyl)pyrimidine + H(+) = thiamine phosphate + diphosphate. It functions in the pathway cofactor biosynthesis; thiamine diphosphate biosynthesis; thiamine phosphate from 4-amino-2-methyl-5-diphosphomethylpyrimidine and 4-methyl-5-(2-phosphoethyl)-thiazole: step 1/1. Condenses 4-methyl-5-(beta-hydroxyethyl)thiazole monophosphate (THZ-P) and 2-methyl-4-amino-5-hydroxymethyl pyrimidine pyrophosphate (HMP-PP) to form thiamine monophosphate (TMP). This Thermobifida fusca (strain YX) protein is Thiamine-phosphate synthase.